Here is a 274-residue protein sequence, read N- to C-terminus: Rhamnulose-1-phosphate aldolase (274 aa).

The active site involves glutamate 117. Positions 141, 143, and 212 each coordinate Zn(2+).

This sequence belongs to the aldolase class II family. RhaD subfamily. In terms of assembly, homotetramer. Zn(2+) is required as a cofactor.

Its subcellular location is the cytoplasm. It catalyses the reaction L-rhamnulose 1-phosphate = (S)-lactaldehyde + dihydroxyacetone phosphate. It participates in carbohydrate degradation; L-rhamnose degradation; glycerone phosphate from L-rhamnose: step 3/3. Functionally, catalyzes the reversible cleavage of L-rhamnulose-1-phosphate to dihydroxyacetone phosphate (DHAP) and L-lactaldehyde. The protein is Rhamnulose-1-phosphate aldolase of Yersinia pestis.